Consider the following 252-residue polypeptide: Geranylgeranylglyceryl phosphate synthase (252 aa).

Residues Asp27 and Ser56 each contribute to the Mg(2+) site. Sn-glycerol 1-phosphate-binding positions include 175 to 181, 206 to 207, and 228 to 229; these read YLEAGSG, GG, and GT.

It belongs to the GGGP/HepGP synthase family. Group II subfamily. Mg(2+) serves as cofactor.

It localises to the cytoplasm. It catalyses the reaction sn-glycerol 1-phosphate + (2E,6E,10E)-geranylgeranyl diphosphate = sn-3-O-(geranylgeranyl)glycerol 1-phosphate + diphosphate. The protein operates within membrane lipid metabolism; glycerophospholipid metabolism. Prenyltransferase that catalyzes the transfer of the geranylgeranyl moiety of geranylgeranyl diphosphate (GGPP) to the C3 hydroxyl of sn-glycerol-1-phosphate (G1P). This reaction is the first ether-bond-formation step in the biosynthesis of archaeal membrane lipids. This is Geranylgeranylglyceryl phosphate synthase from Pyrococcus abyssi (strain GE5 / Orsay).